Reading from the N-terminus, the 520-residue chain is Glutamyl-tRNA(Gln) amidotransferase subunit A (520 aa).

Catalysis depends on charge relay system residues lysine 80 and serine 155. Residue serine 179 is the Acyl-ester intermediate of the active site.

The protein belongs to the amidase family. GatA subfamily. In terms of assembly, heterotrimer of A, B and C subunits.

The catalysed reaction is L-glutamyl-tRNA(Gln) + L-glutamine + ATP + H2O = L-glutaminyl-tRNA(Gln) + L-glutamate + ADP + phosphate + H(+). Its function is as follows. Allows the formation of correctly charged Gln-tRNA(Gln) through the transamidation of misacylated Glu-tRNA(Gln) in organisms which lack glutaminyl-tRNA synthetase. The reaction takes place in the presence of glutamine and ATP through an activated gamma-phospho-Glu-tRNA(Gln). This is Glutamyl-tRNA(Gln) amidotransferase subunit A from Renibacterium salmoninarum (strain ATCC 33209 / DSM 20767 / JCM 11484 / NBRC 15589 / NCIMB 2235).